The primary structure comprises 142 residues: Large ribosomal subunit protein uL13 (142 aa).

The protein belongs to the universal ribosomal protein uL13 family. In terms of assembly, part of the 50S ribosomal subunit.

This protein is one of the early assembly proteins of the 50S ribosomal subunit, although it is not seen to bind rRNA by itself. It is important during the early stages of 50S assembly. This chain is Large ribosomal subunit protein uL13, found in Shewanella baltica (strain OS185).